Reading from the N-terminus, the 31-residue chain is Sarcolipin (31 aa).

The Cytoplasmic segment spans residues 1–7 (MGINTRE). The helical transmembrane segment at 8-26 (LFLNFTIVLITVILMWLLV) threads the bilayer. Topologically, residues 27–31 (RSYQY) are lumenal.

Belongs to the sarcolipin family. As to quaternary structure, homooligomer. Can also form heterooligomers with other sarcoplasmic/endoplasmic reticulum calcium ATPase (SERCA) regulators ARLN, ERLN, PLN and STRIT1/DWORF. Monomer. Interacts with calcium ATPase ATP2A1/SERCA1. Interacts as a monomer with ATP2A2/SERCA2; the interaction decreases ATP2A2 Ca(2+) affinity. Interacts with VMP1; VMP1 competes with PLN and SLN to prevent them from forming an inhibitory complex with ATP2A2.

It is found in the sarcoplasmic reticulum membrane. The protein resides in the endoplasmic reticulum membrane. Reversibly inhibits the activity of ATP2A1/SERCA1 and ATP2A2/SERCA2 in sarcoplasmic reticulum by decreasing the apparent affinity of the ATPase for Ca(2+). Also inhibits the activity of ATP2A3/SERCA3. Modulates calcium re-uptake during muscle relaxation and plays an important role in calcium homeostasis in muscle. Required for muscle-based, non-shivering thermogenesis. The protein is Sarcolipin of Homo sapiens (Human).